The primary structure comprises 417 residues: Gamma-glutamyl phosphate reductase (417 aa).

It belongs to the gamma-glutamyl phosphate reductase family.

Its subcellular location is the cytoplasm. The enzyme catalyses L-glutamate 5-semialdehyde + phosphate + NADP(+) = L-glutamyl 5-phosphate + NADPH + H(+). It participates in amino-acid biosynthesis; L-proline biosynthesis; L-glutamate 5-semialdehyde from L-glutamate: step 2/2. Functionally, catalyzes the NADPH-dependent reduction of L-glutamate 5-phosphate into L-glutamate 5-semialdehyde and phosphate. The product spontaneously undergoes cyclization to form 1-pyrroline-5-carboxylate. This Shigella boydii serotype 18 (strain CDC 3083-94 / BS512) protein is Gamma-glutamyl phosphate reductase.